The sequence spans 261 residues: Calbindin (261 aa).

A2 carries the post-translational modification N-acetylalanine. Residues 2-7 (AESHLQ) form an interaction with RANBP9 region. EF-hand domains are found at residues 11–46 (ITAS…LQQA), 53–88 (ELSP…EENF), 98–133 (KSCE…LLEK), 142–177 (KLAE…QENF), and 186–221 (MCGK…LCEK). 5 residues coordinate Ca(2+): D24, D26, S28, Y30, and E35. Residues D111, D113, S115, E122, D155, N157, D159, K161, E166, D199, D201, N203, Y205, and E210 each contribute to the Ca(2+) site.

This sequence belongs to the calbindin family. As to quaternary structure, interacts with RANBP9.

Functionally, buffers cytosolic calcium. May stimulate a membrane Ca(2+)-ATPase and a 3',5'-cyclic nucleotide phosphodiesterase. The sequence is that of Calbindin (CALB1) from Homo sapiens (Human).